Consider the following 295-residue polypeptide: Vesicle-associated protein 4-2 (295 aa).

Positions 1–10 (MTMTEEKPTS) are enriched in basic and acidic residues. Residues 1–99 (MTMTEEKPTS…PSPSVSSVAK (99 aa)) form a disordered region. Positions 31–53 (NAASSAATSPFPSGASSSSTSSH) are enriched in low complexity. Residues 54–71 (LHNHHQHHHQHHHQHHHQ) show a composition bias toward basic residues. Positions 83–98 (GQNQHPTPSPSVSSVA) are enriched in polar residues. In terms of domain architecture, MSP spans 107 to 229 (RLKLDPSEKL…KEQILRVIFL (123 aa)). A compositionally biased stretch (basic and acidic residues) spans 249 to 263 (DAAVEARKKPPEETG). The interval 249 to 270 (DAAVEARKKPPEETGPKMIGEG) is disordered. A Phosphoserine modification is found at serine 294.

Belongs to the VAMP-associated protein (VAP) (TC 9.B.17) family.

Its function is as follows. May play a role in vesicle trafficking. The polypeptide is Vesicle-associated protein 4-2 (PVA42) (Arabidopsis thaliana (Mouse-ear cress)).